The sequence spans 219 residues: 2,3-bisphosphoglycerate-dependent phosphoglycerate mutase 2 (219 aa).

Residues 8 to 15 (RHGQSIWN), 21 to 22 (TG), Arg58, 85 to 88 (ERHY), Lys96, 112 to 113 (RR), and 156 to 157 (GN) each bind substrate. His9 functions as the Tele-phosphohistidine intermediate in the catalytic mechanism. The Proton donor/acceptor role is filled by Glu85.

It belongs to the phosphoglycerate mutase family. BPG-dependent PGAM subfamily.

The catalysed reaction is (2R)-2-phosphoglycerate = (2R)-3-phosphoglycerate. It participates in carbohydrate degradation; glycolysis; pyruvate from D-glyceraldehyde 3-phosphate: step 3/5. Its function is as follows. Catalyzes the interconversion of 2-phosphoglycerate and 3-phosphoglycerate. This Gloeobacter violaceus (strain ATCC 29082 / PCC 7421) protein is 2,3-bisphosphoglycerate-dependent phosphoglycerate mutase 2.